A 433-amino-acid chain; its full sequence is LanC-like protein GCL1 (433 aa).

The segment at 1 to 22 (MSSSVDFVTEQGRCGDDGNGAG) is disordered.

This sequence belongs to the LanC-like protein family.

Functionally, may play a role in signaling. May be not involved in abscisic acid (ABA) signaling. In Arabidopsis thaliana (Mouse-ear cress), this protein is LanC-like protein GCL1 (GCL1).